The following is a 142-amino-acid chain: Large ribosomal subunit protein uL11 (142 aa).

It belongs to the universal ribosomal protein uL11 family. Part of the ribosomal stalk of the 50S ribosomal subunit. Interacts with L10 and the large rRNA to form the base of the stalk. L10 forms an elongated spine to which L12 dimers bind in a sequential fashion forming a multimeric L10(L12)X complex. In terms of processing, one or more lysine residues are methylated.

Functionally, forms part of the ribosomal stalk which helps the ribosome interact with GTP-bound translation factors. This Shigella boydii serotype 18 (strain CDC 3083-94 / BS512) protein is Large ribosomal subunit protein uL11.